Reading from the N-terminus, the 78-residue chain is Conotoxin 5 (78 aa).

The signal sequence occupies residues 1-22; that stretch reads MKLTCMMIVTVLFLTAWIFITA. The propeptide occupies 23-49; it reads DNSRNGIENLPRMRRHEMKNPKASKLN. 3 cysteine pairs are disulfide-bonded: Cys53-Cys69, Cys60-Cys73, and Cys68-Cys77.

This sequence belongs to the conotoxin O1 superfamily. In terms of tissue distribution, expressed by the venom duct.

Its subcellular location is the secreted. This Conus imperialis (Imperial cone) protein is Conotoxin 5.